Here is a 119-residue protein sequence, read N- to C-terminus: Large ribosomal subunit protein uL14 (119 aa).

The protein belongs to the universal ribosomal protein uL14 family. Part of the 50S ribosomal subunit. Forms a cluster with proteins L3 and L19. In the 70S ribosome, L14 and L19 interact and together make contacts with the 16S rRNA in bridges B5 and B8.

Functionally, binds to 23S rRNA. Forms part of two intersubunit bridges in the 70S ribosome. The polypeptide is Large ribosomal subunit protein uL14 (Ehrlichia ruminantium (strain Gardel)).